The primary structure comprises 237 residues: tRNA (guanine-N(7)-)-methyltransferase (237 aa).

S-adenosyl-L-methionine-binding residues include Glu68, Glu93, Asp120, and Asp143. Asp143 is a catalytic residue. Residues Lys147, Asp179, and 216-219 (TKFE) contribute to the substrate site.

Belongs to the class I-like SAM-binding methyltransferase superfamily. TrmB family.

It carries out the reaction guanosine(46) in tRNA + S-adenosyl-L-methionine = N(7)-methylguanosine(46) in tRNA + S-adenosyl-L-homocysteine. It functions in the pathway tRNA modification; N(7)-methylguanine-tRNA biosynthesis. Its function is as follows. Catalyzes the formation of N(7)-methylguanine at position 46 (m7G46) in tRNA. The protein is tRNA (guanine-N(7)-)-methyltransferase of Shewanella pealeana (strain ATCC 700345 / ANG-SQ1).